The chain runs to 152 residues: UPF0266 membrane protein YobD (152 aa).

3 helical membrane passes run 6 to 26 (LVLILFIAALLAFAIYDQFIM), 45 to 65 (IDSVIFVGLIVILIYNNVTNH), and 67 to 87 (ALITTWLLSALALMGFYIFWI).

Belongs to the UPF0266 family.

Its subcellular location is the cell inner membrane. This Shigella boydii serotype 18 (strain CDC 3083-94 / BS512) protein is UPF0266 membrane protein YobD.